The primary structure comprises 872 residues: Chaperone protein ClpB 2 (872 aa).

The region spanning 6–148 (PNKFTEKAWE…AEIIKQIRGT (143 aa)) is the Clp R domain. 2 repeat regions span residues 9 to 73 (FTEK…IAQQ) and 85 to 148 (LGRS…IRGT). The interval 161–342 (ESLEKYGRDL…RRFQEVLVDE (182 aa)) is NBD1. 208–215 (GEPGVGKT) contributes to the ATP binding site. Positions 343 to 551 (PNVLDTISIL…IAEIISKWTG (209 aa)) are linker. Residues 393 to 527 (IDLVDEAAAK…LETQLAEQQT (135 aa)) are a coiled coil. Residues 561–772 (EKEKLLHLED…RVDETIIFHG (212 aa)) are NBD2. Position 611–618 (611–618 (GPTGVGKT)) interacts with ATP. Residues 773-872 (LQKSELRSIV…TSLRGDLVIV (100 aa)) form a C-terminal region.

Belongs to the ClpA/ClpB family. In terms of assembly, homohexamer. The oligomerization is ATP-dependent.

It localises to the cytoplasm. Part of a stress-induced multi-chaperone system, it is involved in the recovery of the cell from heat-induced damage, in cooperation with DnaK, DnaJ and GrpE. Acts before DnaK, in the processing of protein aggregates. Protein binding stimulates the ATPase activity; ATP hydrolysis unfolds the denatured protein aggregates, which probably helps expose new hydrophobic binding sites on the surface of ClpB-bound aggregates, contributing to the solubilization and refolding of denatured protein aggregates by DnaK. In Synechocystis sp. (strain ATCC 27184 / PCC 6803 / Kazusa), this protein is Chaperone protein ClpB 2 (clpB2).